The following is a 208-amino-acid chain: MVSRRVHTLLEQLRAQGIKDEQVLDALAAVPREKFIDEAFEHKAWDNIALPIGQGQTISQPYMVARMTELLELTPQSRVLEIGTGSGYQTAILAHLVQHVCSVERIKGLQWQARRRLKQLDLHNVSTRHGDGWQGWQARAPFDAIIVTAAPPEIPTALMTQLDEGGILVLPVGEEHQFLKRVRRRGGEFIIDTVEAVRFVPLVKGELA.

Ser59 is a catalytic residue.

Belongs to the methyltransferase superfamily. L-isoaspartyl/D-aspartyl protein methyltransferase family.

It localises to the cytoplasm. It carries out the reaction [protein]-L-isoaspartate + S-adenosyl-L-methionine = [protein]-L-isoaspartate alpha-methyl ester + S-adenosyl-L-homocysteine. In terms of biological role, catalyzes the methyl esterification of L-isoaspartyl residues in peptides and proteins that result from spontaneous decomposition of normal L-aspartyl and L-asparaginyl residues. It plays a role in the repair and/or degradation of damaged proteins. This Citrobacter koseri (strain ATCC BAA-895 / CDC 4225-83 / SGSC4696) protein is Protein-L-isoaspartate O-methyltransferase.